We begin with the raw amino-acid sequence, 134 residues long: D-ribose pyranase (134 aa).

The active-site Proton donor is the His20. Substrate-binding positions include Asp28, His101, and 123–125 (YCN).

This sequence belongs to the RbsD / FucU family. RbsD subfamily. Homodecamer.

It localises to the cytoplasm. It catalyses the reaction beta-D-ribopyranose = beta-D-ribofuranose. The protein operates within carbohydrate metabolism; D-ribose degradation; D-ribose 5-phosphate from beta-D-ribopyranose: step 1/2. In terms of biological role, catalyzes the interconversion of beta-pyran and beta-furan forms of D-ribose. The sequence is that of D-ribose pyranase from Pseudomonas fluorescens (strain ATCC BAA-477 / NRRL B-23932 / Pf-5).